A 373-amino-acid polypeptide reads, in one-letter code: Lipoyl amidotransferase LIPT1, mitochondrial (373 aa).

Residues 1 to 25 (MLIPLSMKNCFRLLCQHKVPAAGFK) constitute a mitochondrion transit peptide. Residues 57-243 (LEGKPILFLW…EYAAHHQVDG (187 aa)) form the BPL/LPL catalytic domain. (R)-lipoyl-5'-AMP is bound by residues Tyr107, Lys151, Lys161, and Thr179.

This sequence belongs to the LplA family.

Its subcellular location is the mitochondrion. It carries out the reaction (R)-lipoyl-5'-AMP + L-lysyl-[lipoyl-carrier protein] = N(6)-[(R)-lipoyl]-L-lysyl-[lipoyl-carrier protein] + AMP + 2 H(+). The enzyme catalyses N(6)-[(R)-lipoyl]-L-lysyl-[glycine-cleavage complex H protein] + L-lysyl-[lipoyl-carrier protein] = L-lysyl-[glycine-cleavage complex H protein] + N(6)-[(R)-lipoyl]-L-lysyl-[lipoyl-carrier protein]. Its pathway is protein modification; protein lipoylation via exogenous pathway; protein N(6)-(lipoyl)lysine from lipoate: step 2/2. Lipoyl amidotransferase that catalyzes the transfer of lipoyl moieties from lipoyl-protein H of the glycine cleavage system (lipoyl-GCSH) to E2 subunits of the pyruvate dehydrogenase complex (PDCE2). Unable to catalyze the transfer of octanoyl from octanoyl-GCSH to PDCE2. In vitro, it is also able to catalyze the transfer of the lipoyl group from lipoyl-AMP to the specific lysine residue of lipoyl domains of lipoate-dependent enzymes but this reaction may not be physiologically relevant. This chain is Lipoyl amidotransferase LIPT1, mitochondrial, found in Mus musculus (Mouse).